Here is a 313-residue protein sequence, read N- to C-terminus: Biotin synthase (313 aa).

Positions 28-258 (NFGNDIELCS…LFPQARLRLS (231 aa)) constitute a Radical SAM core domain. [4Fe-4S] cluster contacts are provided by Cys46, Cys50, and Cys53. Residues Cys90, Cys121, Cys181, and Arg256 each coordinate [2Fe-2S] cluster.

This sequence belongs to the radical SAM superfamily. Biotin synthase family. Homodimer. It depends on [4Fe-4S] cluster as a cofactor. [2Fe-2S] cluster serves as cofactor.

The enzyme catalyses (4R,5S)-dethiobiotin + (sulfur carrier)-SH + 2 reduced [2Fe-2S]-[ferredoxin] + 2 S-adenosyl-L-methionine = (sulfur carrier)-H + biotin + 2 5'-deoxyadenosine + 2 L-methionine + 2 oxidized [2Fe-2S]-[ferredoxin]. Its pathway is cofactor biosynthesis; biotin biosynthesis; biotin from 7,8-diaminononanoate: step 2/2. Functionally, catalyzes the conversion of dethiobiotin (DTB) to biotin by the insertion of a sulfur atom into dethiobiotin via a radical-based mechanism. The chain is Biotin synthase from Francisella tularensis subsp. tularensis (strain FSC 198).